A 218-amino-acid chain; its full sequence is Acetoacetyl-CoA:acetate/butyrate CoA transferase alpha subunit (218 aa).

24–30 is a binding site for CoA; it reads GGFLNCG.

The protein belongs to the 3-oxoacid CoA-transferase subunit A family. Heterotetramer composed of two alpha subunits (CtfA) and two beta subunits (CtfB).

It catalyses the reaction acetoacetate + butanoyl-CoA = acetoacetyl-CoA + butanoate. It carries out the reaction acetoacetate + acetyl-CoA = acetoacetyl-CoA + acetate. With respect to regulation, the acetate and butyrate conversion reactions are inhibited in vitro by physiological levels of acetone and butanol. In terms of biological role, catalyzes the transfer of CoA from acetoacetyl-CoA to acetate, butyrate and propionate. Also shows low activity with valerate, isobutyrate and crotonate. Plays an important role in the metabolic shift between the acid-producing and solvent-forming states of C.acetobutylicum. Acts mainly to detoxify the medium by removing the acetate and butyrate excreted earlier in the fermentation. This is Acetoacetyl-CoA:acetate/butyrate CoA transferase alpha subunit from Clostridium acetobutylicum (strain ATCC 824 / DSM 792 / JCM 1419 / IAM 19013 / LMG 5710 / NBRC 13948 / NRRL B-527 / VKM B-1787 / 2291 / W).